The following is a 373-amino-acid chain: Dual-specificity RNA methyltransferase RlmN (373 aa).

Glu-91 acts as the Proton acceptor in catalysis. One can recognise a Radical SAM core domain in the interval Glu-97 to Asp-339. A disulfide bridge connects residues Cys-104 and Cys-344. Residues Cys-111, Cys-115, and Cys-118 each coordinate [4Fe-4S] cluster. S-adenosyl-L-methionine contacts are provided by residues Gly-165–Glu-166, Ser-197, Ser-219–His-221, and Asn-301. Residue Cys-344 is the S-methylcysteine intermediate of the active site.

The protein belongs to the radical SAM superfamily. RlmN family. [4Fe-4S] cluster serves as cofactor.

It localises to the cytoplasm. It carries out the reaction adenosine(2503) in 23S rRNA + 2 reduced [2Fe-2S]-[ferredoxin] + 2 S-adenosyl-L-methionine = 2-methyladenosine(2503) in 23S rRNA + 5'-deoxyadenosine + L-methionine + 2 oxidized [2Fe-2S]-[ferredoxin] + S-adenosyl-L-homocysteine. It catalyses the reaction adenosine(37) in tRNA + 2 reduced [2Fe-2S]-[ferredoxin] + 2 S-adenosyl-L-methionine = 2-methyladenosine(37) in tRNA + 5'-deoxyadenosine + L-methionine + 2 oxidized [2Fe-2S]-[ferredoxin] + S-adenosyl-L-homocysteine. Functionally, specifically methylates position 2 of adenine 2503 in 23S rRNA and position 2 of adenine 37 in tRNAs. m2A2503 modification seems to play a crucial role in the proofreading step occurring at the peptidyl transferase center and thus would serve to optimize ribosomal fidelity. The protein is Dual-specificity RNA methyltransferase RlmN of Paracidovorax citrulli (strain AAC00-1) (Acidovorax citrulli).